The chain runs to 695 residues: DSC E3 ubiquitin ligase complex subunit 1 (695 aa).

Positions 1–25 are cleaved as a signal peptide; sequence MDRRRWVPSTPVVTLLLLFMLFAPA. At 26–319 the chain is on the lumenal side; that stretch reads PRLPSRNGES…KGPRNFVLEN (294 aa). Residues 320–340 traverse the membrane as a helical segment; sequence HLVRFSSLYIFIVLSQIFVLL. Topologically, residues 341 to 353 are cytoplasmic; that stretch reads RQMRINSPSHVQR. Residues 354 to 374 form a helical membrane-spanning segment; the sequence is LSFLTIAMQAGLDAYIAIFFL. Topologically, residues 375–382 are lumenal; that stretch reads STNAVIEK. Residues 383 to 403 traverse the membrane as a helical segment; the sequence is GYLPFVSVAFLSLVPSVMFTM. The Cytoplasmic segment spans residues 404 to 486; the sequence is RYLALILRVQ…QRDWSAVCLR (83 aa). The interval 419-473 is disordered; the sequence is PPAPRPVTNNSSNNNTNQSNASNENSPNAPSAANDNTETTTVNPPQEDDQPMTQH. Residues 427–454 show a composition bias toward low complexity; sequence NNSSNNNTNQSNASNENSPNAPSAANDN. The helical transmembrane segment at 487 to 507 threads the bilayer; that stretch reads FYFIILVVCIASLYSAFWPVI. Over 508–509 the chain is Lumenal; that stretch reads YR. Residues 510–530 traverse the membrane as a helical segment; it reads FYFISALIFTSYSFWIPQIIQ. Residues 531–540 lie on the Cytoplasmic side of the membrane; it reads NVKQGTSRSF. The helical transmembrane segment at 541-561 threads the bilayer; sequence TWTYILGASVLRLYLPLAIFI. Topologically, residues 562-572 are lumenal; that stretch reads DSELILGFPPK. A helical transmembrane segment spans residues 573–593; the sequence is YFFALGLVLWMLFQVLVLLVQ. Residues 594 to 695 are Cytoplasmic-facing; it reads DTLGPRFFLP…PVCRCHLPAV (102 aa). Residues 634–689 form an RING-type; atypical zinc finger; the sequence is CPICMQPIELVSTGSTLNPASMMVRRNYMLTPCHHLYHRQCLLQWMETRSICPVCR.

Component of the DSC E3 ubiquitin ligase complex composed of dsc1, dsc2, dsc3 and dsc4.

It is found in the endoplasmic reticulum membrane. The protein localises to the golgi apparatus membrane. The enzyme catalyses S-ubiquitinyl-[E2 ubiquitin-conjugating enzyme]-L-cysteine + [acceptor protein]-L-lysine = [E2 ubiquitin-conjugating enzyme]-L-cysteine + N(6)-ubiquitinyl-[acceptor protein]-L-lysine.. It participates in protein modification; protein ubiquitination. In terms of biological role, catalytic component of the DSC E3 ubiquitin ligase complex which is required for the sre1 transcriptional activator proteolytic cleavage to release the soluble transcription factor from the membrane in low oxygen or sterol conditions. The complex also plays an important role in the multivesicular body (MVB) pathway and functions in a post-endoplasmic reticulum pathway for protein degradation. This Schizosaccharomyces pombe (strain 972 / ATCC 24843) (Fission yeast) protein is DSC E3 ubiquitin ligase complex subunit 1 (dsc1).